The following is a 555-amino-acid chain: Arginine--tRNA ligase (555 aa).

Residues 117–127 carry the 'HIGH' region motif; the sequence is ANPNGPLHVGH.

The protein belongs to the class-I aminoacyl-tRNA synthetase family.

The protein resides in the cytoplasm. The enzyme catalyses tRNA(Arg) + L-arginine + ATP = L-arginyl-tRNA(Arg) + AMP + diphosphate. The protein is Arginine--tRNA ligase of Methanospirillum hungatei JF-1 (strain ATCC 27890 / DSM 864 / NBRC 100397 / JF-1).